The primary structure comprises 829 residues: Probable beta-glucosidase H (829 aa).

The N-linked (GlcNAc...) asparagine glycan is linked to asparagine 13. Aspartate 225 is an active-site residue. Residues asparagine 304, asparagine 473, asparagine 602, asparagine 627, and asparagine 664 are each glycosylated (N-linked (GlcNAc...) asparagine). Positions 389–548 constitute a PA14 domain; it reads RMLSNAVIHF…DPEQMVANAV (160 aa).

This sequence belongs to the glycosyl hydrolase 3 family.

The protein localises to the secreted. The enzyme catalyses Hydrolysis of terminal, non-reducing beta-D-glucosyl residues with release of beta-D-glucose.. The protein operates within glycan metabolism; cellulose degradation. Beta-glucosidases are one of a number of cellulolytic enzymes involved in the degradation of cellulosic biomass. Catalyzes the last step releasing glucose from the inhibitory cellobiose. This Neosartorya fischeri (strain ATCC 1020 / DSM 3700 / CBS 544.65 / FGSC A1164 / JCM 1740 / NRRL 181 / WB 181) (Aspergillus fischerianus) protein is Probable beta-glucosidase H (bglH).